A 414-amino-acid chain; its full sequence is D-mannose isomerase (414 aa).

Active-site proton donor/acceptor residues include H255 and H390.

The protein belongs to the N-acylglucosamine 2-epimerase family. Monomer.

The catalysed reaction is D-mannose = D-fructose. Its activity is regulated as follows. Strongly inhibited by Ag(2+), Cu(2+) and cetyltrimethyl ammonium bromide (CTAB). Functionally, catalyzes the reversible isomerization of D-mannose to D-fructose. Shows high specific activity towards mannose and fructose, and has no detectable activity towards other monosaccharides and disaccharides. This is D-mannose isomerase from Pseudomonas cannabina pv. alisalensis.